Reading from the N-terminus, the 285-residue chain is Phycobilisome 31.6 kDa linker polypeptide, phycocyanin-associated, rod (285 aa).

Positions 1–180 (MPITTAASRL…LYRGYATSDR (180 aa)) constitute a PBS-linker domain.

Belongs to the phycobilisome linker protein family.

It is found in the cellular thylakoid membrane. Functionally, rod linker protein, associated with phycocyanin. Linker polypeptides determine the state of aggregation and the location of the disk-shaped phycobiliprotein units within the phycobilisome and modulate their spectroscopic properties in order to mediate a directed and optimal energy transfer. The chain is Phycobilisome 31.6 kDa linker polypeptide, phycocyanin-associated, rod (cpcI3) from Microchaete diplosiphon (Fremyella diplosiphon).